Consider the following 706-residue polypeptide: Glycylpeptide N-tetradecanoyltransferase (706 aa).

The tract at residues 1–119 (MSGIAGTSQD…LASGSSREGK (119 aa)) is disordered. Low complexity predominate over residues 7 to 42 (TSQDTSVAASASSSSTRPAAASSSIAPPSPSLTTAP). Acidic residues predominate over residues 47 to 65 (EQDDDDDQENDDEEEEEEG). The span at 78–95 (KQRKKKKSKAAAKLRKKL) shows a compositional bias: basic residues. Residues 180–183 (HKFW), 317–319 (LCV), and 325–329 (SKRLA) contribute to the tetradecanoyl-CoA site. Catalysis depends on Val-706, which acts as the Proton acceptor; via carboxylate.

The protein belongs to the NMT family. Monomer.

The protein localises to the cytoplasm. It catalyses the reaction N-terminal glycyl-[protein] + tetradecanoyl-CoA = N-tetradecanoylglycyl-[protein] + CoA + H(+). Adds a myristoyl group to the N-terminal glycine residue of certain cellular proteins. The protein is Glycylpeptide N-tetradecanoyltransferase (NMT1) of Mycosarcoma maydis (Corn smut fungus).